Consider the following 184-residue polypeptide: Photosystem I assembly protein Ycf4 (184 aa).

2 consecutive transmembrane segments (helical) span residues 19–39 (ISNF…VLVG) and 57–77 (ILFF…LFIS).

It belongs to the Ycf4 family.

Its subcellular location is the plastid. It is found in the chloroplast thylakoid membrane. Functionally, seems to be required for the assembly of the photosystem I complex. The sequence is that of Photosystem I assembly protein Ycf4 from Eucalyptus globulus subsp. globulus (Tasmanian blue gum).